We begin with the raw amino-acid sequence, 397 residues long: 3-ketoacyl-CoA thiolase, mitochondrial (397 aa).

Residues 1-16 (MALLRGVFVVAAKRTP) constitute a mitochondrion; not cleaved transit peptide. At Lys-25 the chain carries N6-acetyllysine; alternate. An N6-succinyllysine; alternate modification is found at Lys-25. Residue Lys-45 is modified to N6-succinyllysine. Cys-92 functions as the Acyl-thioester intermediate in the catalytic mechanism. Residue Thr-119 is modified to Phosphothreonine. Ser-121 carries the post-translational modification Phosphoserine. Tyr-127 carries the post-translational modification Phosphotyrosine. Residue Thr-136 is modified to Phosphothreonine. An N6-acetyllysine; alternate modification is found at Lys-137. N6-succinyllysine; alternate is present on Lys-137. A Phosphoserine modification is found at Ser-140. N6-acetyllysine; alternate is present on residues Lys-143, Lys-171, Lys-191, and Lys-209. Lys-143, Lys-171, Lys-191, and Lys-209 each carry N6-succinyllysine; alternate. An N6-succinyllysine mark is found at Lys-211, Lys-212, and Lys-214. The CoA site is built by Arg-224 and Thr-227. An N6-acetyllysine; alternate modification is found at Lys-234. Lys-234 is modified (N6-succinyllysine; alternate). Lys-240 bears the N6-succinyllysine mark. Lys-241 is subject to N6-acetyllysine. Ser-251 is a binding site for CoA. Lys-269 and Lys-270 each carry N6-acetyllysine. Lys-305 carries the post-translational modification N6-acetyllysine; alternate. At Lys-305 the chain carries N6-succinyllysine; alternate. The residue at position 310 (Ser-310) is a Phosphoserine. Lys-312 is modified (N6-acetyllysine; alternate). Lys-312 carries the post-translational modification N6-succinyllysine; alternate. Residue Ser-333 is modified to Phosphoserine. N6-acetyllysine is present on residues Lys-340 and Lys-375. Cys-382 acts as the Proton donor/acceptor in catalysis.

It belongs to the thiolase-like superfamily. Thiolase family. In terms of assembly, homotetramer. Interacts with BNIP3.

The protein localises to the mitochondrion. It catalyses the reaction an acyl-CoA + acetyl-CoA = a 3-oxoacyl-CoA + CoA. The enzyme catalyses 2 acetyl-CoA = acetoacetyl-CoA + CoA. It carries out the reaction acetyl-CoA + H2O = acetate + CoA + H(+). The catalysed reaction is propanoyl-CoA + H2O = propanoate + CoA + H(+). It catalyses the reaction butanoyl-CoA + H2O = butanoate + CoA + H(+). The enzyme catalyses hexanoyl-CoA + H2O = hexanoate + CoA + H(+). It carries out the reaction octanoyl-CoA + H2O = octanoate + CoA + H(+). The catalysed reaction is decanoyl-CoA + H2O = decanoate + CoA + H(+). It catalyses the reaction dodecanoyl-CoA + H2O = dodecanoate + CoA + H(+). The enzyme catalyses tetradecanoyl-CoA + H2O = tetradecanoate + CoA + H(+). It carries out the reaction hexadecanoyl-CoA + H2O = hexadecanoate + CoA + H(+). Its pathway is lipid metabolism; fatty acid beta-oxidation. In terms of biological role, in the production of energy from fats, this is one of the enzymes that catalyzes the last step of the mitochondrial beta-oxidation pathway, an aerobic process breaking down fatty acids into acetyl-CoA. Using free coenzyme A/CoA, catalyzes the thiolytic cleavage of medium- to long-chain unbranched 3-oxoacyl-CoAs into acetyl-CoA and a fatty acyl-CoA shortened by two carbon atoms. Also catalyzes the condensation of two acetyl-CoA molecules into acetoacetyl-CoA and could be involved in the production of ketone bodies. Also displays hydrolase activity on various fatty acyl-CoAs. Thereby, could be responsible for the production of acetate in a side reaction to beta-oxidation. Abolishes BNIP3-mediated apoptosis and mitochondrial damage. The sequence is that of 3-ketoacyl-CoA thiolase, mitochondrial (ACAA2) from Pongo abelii (Sumatran orangutan).